Reading from the N-terminus, the 822-residue chain is DNA gyrase subunit A (822 aa).

Residues 32-497 (LPDVRDGLKP…QVLSLEDEDL (466 aa)) form the Topo IIA-type catalytic domain. The O-(5'-phospho-DNA)-tyrosine intermediate role is filled by tyrosine 120. A GyrA-box motif is present at residues 524–530 (QKRGGRG).

It belongs to the type II topoisomerase GyrA/ParC subunit family. Heterotetramer, composed of two GyrA and two GyrB chains. In the heterotetramer, GyrA contains the active site tyrosine that forms a transient covalent intermediate with DNA, while GyrB binds cofactors and catalyzes ATP hydrolysis.

It localises to the cytoplasm. It carries out the reaction ATP-dependent breakage, passage and rejoining of double-stranded DNA.. Its function is as follows. A type II topoisomerase that negatively supercoils closed circular double-stranded (ds) DNA in an ATP-dependent manner to modulate DNA topology and maintain chromosomes in an underwound state. Negative supercoiling favors strand separation, and DNA replication, transcription, recombination and repair, all of which involve strand separation. Also able to catalyze the interconversion of other topological isomers of dsDNA rings, including catenanes and knotted rings. Type II topoisomerases break and join 2 DNA strands simultaneously in an ATP-dependent manner. The sequence is that of DNA gyrase subunit A from Streptococcus pneumoniae (strain ATCC BAA-255 / R6).